The following is a 215-amino-acid chain: Vesicle transport protein SFT2C (215 aa).

Residues 1 to 82 (MADLHRQLQE…RGQRLAAGGG (82 aa)) lie on the Cytoplasmic side of the membrane. The helical transmembrane segment at 83–103 (CLLLAALCFGLAALYAPVLLL) threads the bilayer. Residues 104-107 (RARK) are Lumenal-facing. The helical transmembrane segment at 108–128 (FALLWSLGSALALAGSALLRG) threads the bilayer. The Cytoplasmic portion of the chain corresponds to 129–142 (GAACGRLLRCEEAP). A helical transmembrane segment spans residues 143–163 (SRPALLYMAALGATLFAALGL). The Lumenal portion of the chain corresponds to 164–166 (RST). Residues 167-187 (LLTVLGAGAQVAALLAALVGL) form a helical membrane-spanning segment. Residues 188 to 215 (LPWGGGTALRLALGRLGRGAGLAKVLPV) are Cytoplasmic-facing.

The protein belongs to the SFT2 family.

The protein resides in the membrane. In terms of biological role, may be involved in fusion of retrograde transport vesicles derived from an endocytic compartment with the Golgi complex. In Homo sapiens (Human), this protein is Vesicle transport protein SFT2C.